We begin with the raw amino-acid sequence, 264 residues long: Tetraspanin-12 (264 aa).

Over 1–13 the chain is Cytoplasmic; sequence MLRLSNAAVITTN. The helical transmembrane segment at 14 to 34 threads the bilayer; that stretch reads AILALIGLAALSFSVYVYVQG. At 35–45 the chain is on the extracellular side; sequence PSQCQRFVQNP. A helical membrane pass occupies residues 46 to 66; it reads LIVTAALLFFISSLGLIAALY. Topologically, residues 67 to 75 are cytoplasmic; it reads GSHIIITLY. Residues 76–96 traverse the membrane as a helical segment; sequence LFFLFLSILLLLVLSVFIFLV. The Extracellular segment spans residues 97 to 228; the sequence is TNPTAGKALS…VLKGIRKRWR (132 aa). Residue Asn180 is glycosylated (N-linked (GlcNAc...) asparagine). A helical transmembrane segment spans residues 229-249; it reads ILIVVNLLLILLVVFLYSCGC. Residues 250-264 are Cytoplasmic-facing; it reads CVRKNNRVPWKRRFF.

This sequence belongs to the tetraspanin (TM4SF) family.

The protein localises to the membrane. In terms of biological role, may be involved in the regulation of cell differentiation. The protein is Tetraspanin-12 (TET12) of Arabidopsis thaliana (Mouse-ear cress).